We begin with the raw amino-acid sequence, 118 residues long: MSQGPPAVSVLQRSVDAPGNQPQSPKDDDRKVRRREKNRVAAQRSRKKQTQKADKLHEEHESLEQENSVLRREISKLKEELRHLSEVLKEHEKMCPLLLCPMNFVQLRSDPVASCLPR.

The segment at 1 to 69 (MSQGPPAVSV…HESLEQENSV (69 aa)) is disordered. Phosphoserine is present on residues serine 2 and serine 24. A bZIP domain is found at 28–91 (DDRKVRRREK…RHLSEVLKEH (64 aa)). The interval 30-55 (RKVRRREKNRVAAQRSRKKQTQKADK) is basic motif. Positions 51 to 69 (QKADKLHEEHESLEQENSV) are enriched in basic and acidic residues. The segment at 56–84 (LHEEHESLEQENSVLRREISKLKEELRHL) is leucine-zipper.

This sequence belongs to the bZIP family. Heterodimer; heterodimerizes with JUN family proteins. Interacts with JUN. In terms of tissue distribution, highly expressed in CD8-alpha(+) classical dendritic cells (cDCs), with low to absent expression in other immune cells and non-immune tissues.

Its subcellular location is the nucleus. Functionally, AP-1 family transcription factor that controls the differentiation of CD8(+) thymic conventional dendritic cells in the immune system. Acts via the formation of a heterodimer with JUN family proteins that recognizes and binds DNA sequence 5'-TGA[CG]TCA-3' and regulates expression of target genes. Required for development of CD8-alpha(+) classical dendritic cells (cDCs) and related CD103(+) dendritic cells that cross-present antigens to CD8 T-cells and produce interleukin-12 (IL12) in response to pathogens. This is Basic leucine zipper transcriptional factor ATF-like 3 (Batf3) from Mus musculus (Mouse).